The primary structure comprises 470 residues: Methylenetetrahydrofolate--tRNA-(uracil-5-)-methyltransferase TrmFO (470 aa).

10 to 15 (GAGLAG) is a binding site for FAD.

Belongs to the MnmG family. TrmFO subfamily. It depends on FAD as a cofactor.

The protein resides in the cytoplasm. The catalysed reaction is uridine(54) in tRNA + (6R)-5,10-methylene-5,6,7,8-tetrahydrofolate + NADH + H(+) = 5-methyluridine(54) in tRNA + (6S)-5,6,7,8-tetrahydrofolate + NAD(+). The enzyme catalyses uridine(54) in tRNA + (6R)-5,10-methylene-5,6,7,8-tetrahydrofolate + NADPH + H(+) = 5-methyluridine(54) in tRNA + (6S)-5,6,7,8-tetrahydrofolate + NADP(+). Functionally, catalyzes the folate-dependent formation of 5-methyl-uridine at position 54 (M-5-U54) in all tRNAs. This Prochlorococcus marinus (strain MIT 9301) protein is Methylenetetrahydrofolate--tRNA-(uracil-5-)-methyltransferase TrmFO.